Consider the following 465-residue polypeptide: Methionine aminopeptidase 2-2 (465 aa).

Basic residues predominate over residues 1–11 (MGSKTPHNHRR). The segment at 1-89 (MGSKTPHNHR…KKKKNTKELE (89 aa)) is disordered. Residues 43 to 54 (GESEGGEDEDDD) show a composition bias toward acidic residues. A compositionally biased stretch (basic residues) spans 73 to 84 (RNKRKKKKKKKN). Residue H217 coordinates substrate. 3 residues coordinate a divalent metal cation: D238, D249, and H318. H326 is a binding site for substrate. A divalent metal cation-binding residues include E351 and E446.

Belongs to the peptidase M24A family. Methionine aminopeptidase eukaryotic type 2 subfamily. It depends on Co(2+) as a cofactor. Zn(2+) serves as cofactor. Mn(2+) is required as a cofactor. The cofactor is Fe(2+).

The protein localises to the cytoplasm. It carries out the reaction Release of N-terminal amino acids, preferentially methionine, from peptides and arylamides.. Functionally, cotranslationally removes the N-terminal methionine from nascent proteins. The N-terminal methionine is often cleaved when the second residue in the primary sequence is small and uncharged (Met-Ala-, Cys, Gly, Pro, Ser, Thr, or Val). The chain is Methionine aminopeptidase 2-2 from Ajellomyces capsulatus (strain G186AR / H82 / ATCC MYA-2454 / RMSCC 2432) (Darling's disease fungus).